The primary structure comprises 216 residues: Large ribosomal subunit protein uL3 (216 aa).

Residues Gly136–Lys155 are disordered. Gln151 is subject to N5-methylglutamine.

The protein belongs to the universal ribosomal protein uL3 family. In terms of assembly, part of the 50S ribosomal subunit. Forms a cluster with proteins L14 and L19. Post-translationally, methylated by PrmB.

In terms of biological role, one of the primary rRNA binding proteins, it binds directly near the 3'-end of the 23S rRNA, where it nucleates assembly of the 50S subunit. This chain is Large ribosomal subunit protein uL3, found in Rickettsia prowazekii (strain Madrid E).